The chain runs to 397 residues: Acetyl-CoA acetyltransferase (397 aa).

Catalysis depends on Cys95, which acts as the Acyl-thioester intermediate. Residues Tyr187 and Lys230 each contribute to the CoA site. Position 187 (Tyr187) interacts with K(+). K(+)-binding residues include Ala246, Gly247, and Ala249. Ser250 contacts CoA. Val347 is a binding site for K(+). Active-site proton acceptor residues include His351 and Cys379.

Belongs to the thiolase-like superfamily. Thiolase family.

Its subcellular location is the peroxisome. The catalysed reaction is 2 acetyl-CoA = acetoacetyl-CoA + CoA. Functionally, essential for n-decane utilization. The protein is Acetyl-CoA acetyltransferase (PAT1) of Yarrowia lipolytica (strain CLIB 122 / E 150) (Yeast).